A 429-amino-acid chain; its full sequence is Proton extrusion protein PxcA (429 aa).

Residues leucine 139 to valine 161 are disordered. The segment covering aspartate 150–valine 161 has biased composition (basic and acidic residues). A run of 4 helical transmembrane segments spans residues phenylalanine 211–threonine 231, alanine 306–isoleucine 326, leucine 353–isoleucine 373, and phenylalanine 389–isoleucine 409.

The protein belongs to the CemA family.

It localises to the cell inner membrane. Required for H(+) efflux immediately after light irradiation to form a rapid H(+) concentration gradient across the thylakoid membranes. Together with PxcL, contributes to transient H(+) uptake following dark to light transition. This chain is Proton extrusion protein PxcA, found in Picosynechococcus sp. (strain ATCC 27264 / PCC 7002 / PR-6) (Agmenellum quadruplicatum).